The primary structure comprises 311 residues: Ribosomal protein L11 methyltransferase (311 aa).

S-adenosyl-L-methionine-binding residues include threonine 162, glycine 183, aspartate 205, and asparagine 248.

It belongs to the methyltransferase superfamily. PrmA family.

Its subcellular location is the cytoplasm. The enzyme catalyses L-lysyl-[protein] + 3 S-adenosyl-L-methionine = N(6),N(6),N(6)-trimethyl-L-lysyl-[protein] + 3 S-adenosyl-L-homocysteine + 3 H(+). Its function is as follows. Methylates ribosomal protein L11. The protein is Ribosomal protein L11 methyltransferase of Bacillus velezensis (strain DSM 23117 / BGSC 10A6 / LMG 26770 / FZB42) (Bacillus amyloliquefaciens subsp. plantarum).